Reading from the N-terminus, the 258-residue chain is Chymotrypsin-2 (258 aa).

A signal peptide spans 1–17; that stretch reads MLRKVFAVVSVLLVVSA. A propeptide spans 18–32 (activation peptide); that stretch reads AKVTKLVLDDHYVNR. The Peptidase S1 domain occupies 33–255; that stretch reads VVGGEVAKNG…YHEWVRTTMA (223 aa). Residues cysteine 59 and cysteine 75 are joined by a disulfide bond. Active-site charge relay system residues include histidine 74 and aspartate 119. 2 cysteine pairs are disulfide-bonded: cysteine 182/cysteine 198 and cysteine 208/cysteine 232. Serine 212 serves as the catalytic Charge relay system.

The protein belongs to the peptidase S1 family. After blood feeding, expression is induced in the midgut epithelium, followed by secretion into the midgut lumen.

It localises to the secreted. It catalyses the reaction Preferential cleavage: Tyr-|-Xaa, Trp-|-Xaa, Phe-|-Xaa, Leu-|-Xaa.. The protein is Chymotrypsin-2 (CHYM2) of Anopheles gambiae (African malaria mosquito).